We begin with the raw amino-acid sequence, 595 residues long: RuBisCO large subunit-binding protein subunit beta, chloroplastic (595 aa).

The N-terminal 49 residues, 1–49, are a transit peptide targeting the chloroplast; sequence MASTFSATTSSCNLSSSAAISSFPLAAGKRNANKVVLPRKNRNVKVSAM.

This sequence belongs to the chaperonin (HSP60) family. As to quaternary structure, oligomer of probably six alpha and six beta subunits.

The protein resides in the plastid. The protein localises to the chloroplast. Functionally, this protein binds RuBisCO small and large subunits and is implicated in the assembly of the enzyme oligomer. The protein is RuBisCO large subunit-binding protein subunit beta, chloroplastic of Pisum sativum (Garden pea).